The chain runs to 463 residues: Glutamate--tRNA ligase (463 aa).

Residues 9–19 (PSPTGYLHVGG) carry the 'HIGH' region motif. The span at 115–129 (AGEKPRYDGTWRPEA) shows a compositional bias: basic and acidic residues. The interval 115-136 (AGEKPRYDGTWRPEAGKTLPAI) is disordered. Residues 241–245 (KLSKR) carry the 'KMSKS' region motif. Lys244 is a binding site for ATP.

It belongs to the class-I aminoacyl-tRNA synthetase family. Glutamate--tRNA ligase type 1 subfamily. In terms of assembly, monomer.

The protein resides in the cytoplasm. It catalyses the reaction tRNA(Glu) + L-glutamate + ATP = L-glutamyl-tRNA(Glu) + AMP + diphosphate. Its function is as follows. Catalyzes the attachment of glutamate to tRNA(Glu) in a two-step reaction: glutamate is first activated by ATP to form Glu-AMP and then transferred to the acceptor end of tRNA(Glu). This is Glutamate--tRNA ligase from Janthinobacterium sp. (strain Marseille) (Minibacterium massiliensis).